We begin with the raw amino-acid sequence, 209 residues long: Outer-membrane lipoprotein LolB (209 aa).

Positions 1–17 are cleaved as a signal peptide; that stretch reads MKKSTLLFSLMAMALSG. Cys-18 carries the N-palmitoyl cysteine lipid modification. Residue Cys-18 is the site of S-diacylglycerol cysteine attachment.

This sequence belongs to the LolB family. In terms of assembly, monomer.

It localises to the cell outer membrane. Plays a critical role in the incorporation of lipoproteins in the outer membrane after they are released by the LolA protein. In Haemophilus ducreyi (strain 35000HP / ATCC 700724), this protein is Outer-membrane lipoprotein LolB.